The chain runs to 555 residues: Hydrogenase-4 component G (555 aa).

The protein belongs to the complex I 49 kDa subunit family. [4Fe-4S] cluster serves as cofactor.

In terms of biological role, possible component of hydrogenase 4. The sequence is that of Hydrogenase-4 component G from Escherichia coli (strain K12).